The chain runs to 318 residues: Inactive dihydropteroate synthase 2 (318 aa).

A disordered region spans residues 1 to 25; it reads MRSTPPASAGRSTPPALAGHSTPPA. The region spanning 42–299 is the Pterin-binding domain; sequence ALIMAIVNRT…EVAATRRVLE (258 aa).

It belongs to the DHPS family. In terms of assembly, homodimer.

Has very low affinity for the DHPS substrate 6-hydroxymethyl-7,8-dihydropterin-pyrophosphate, but can bind the inhibitor dapsone. Seems to lack dihydropteroate synthase activity, and does probably not function in folate metabolism. The polypeptide is Inactive dihydropteroate synthase 2 (folP2) (Mycobacterium bovis (strain ATCC BAA-935 / AF2122/97)).